A 213-amino-acid chain; its full sequence is Bcl-2-related ovarian killer protein (213 aa).

S7 is modified (phosphoserine). The interval 15-45 (MDAFDRSPTDKELVAQAKALGREYVHARLLR) is interactions with ITPR1. Residues K25 and K32 each participate in a glycyl lysine isopeptide (Lys-Gly) (interchain with G-Cter in ubiquitin) cross-link. Positions 32-44 (KALGREYVHARLL) match the BH4 motif. The BH3 signature appears at 67–83 (VCTVLLRLGDELEQIRP). The nuclear export signal stretch occupies residues 71–79 (LLRLGDELE). Positions 113–132 (HIFSAGITWGKVVSLYSVAA) match the BH1 motif. Glycyl lysine isopeptide (Lys-Gly) (interchain with G-Cter in ubiquitin) cross-links involve residues K160 and K177. The BH2 motif lies at 165 to 179 (WLRRRGGWTDVLKCV). Residues 190–210 (WLVATLCSFGRFLKAAFFLLL) traverse the membrane as a helical segment.

It belongs to the Bcl-2 family. In terms of assembly, monomer; positively regulates apoptotic process. Homodimer. Heterodimer. Oligomer; promoted by apoptotic stimuli and BH3-only proteins; mediates constitutive activation. Interacts (via BH4 domain) with ITPR1; enhances BOK expression and stabilization; limits apoptosis and prevents ubiquitination and then degradation; protects ITPR1 from proteolysis by CASP3 during apoptosis. Interacts with ITPR2 and ITPR3; binds most strongly to ITPR2, and barely to ITPR3; regulates their expression. Interacts with XPO1; translocates to the cytoplasm. Interacts with BNIP3; promotes oligomerization. In terms of processing, ubiquitinated by AMFR/gp78 E3 ubiquitin ligase complex; mediates degradation by ubiquitin-proteasome pathway in a VCP/p97-dependent manner; prevents from proapoptotic activity; promotes degradation of newly synthesized proteins that are not ITPR1 associated. As to expression, widely expressed. Highly expressed in brain, kidney, and spleen.

Its subcellular location is the mitochondrion membrane. The protein localises to the endoplasmic reticulum membrane. It is found in the mitochondrion inner membrane. The protein resides in the cytoplasm. It localises to the nucleus. Its subcellular location is the mitochondrion. The protein localises to the endoplasmic reticulum. It is found in the mitochondrion outer membrane. The protein resides in the early endosome membrane. It localises to the recycling endosome membrane. Its subcellular location is the nucleus outer membrane. The protein localises to the golgi apparatus. It is found in the cis-Golgi network membrane. The protein resides in the trans-Golgi network membrane. It localises to the membrane. Functionally, apoptosis regulator that functions through different apoptotic signaling pathways. Plays a roles as pro-apoptotic protein that positively regulates intrinsic apoptotic process in a BAX- and BAK1-dependent manner or in a BAX- and BAK1-independent manner. In response to endoplasmic reticulum stress promotes mitochondrial apoptosis through downstream BAX/BAK1 activation and positive regulation of PERK-mediated unfolded protein response. Activates apoptosis independently of heterodimerization with survival-promoting BCL2 and BCL2L1 through induction of mitochondrial outer membrane permeabilization, in a BAX- and BAK1-independent manner, in response to inhibition of ERAD-proteasome degradation system, resulting in cytochrome c release. In response to DNA damage, mediates intrinsic apoptotic process in a TP53-dependent manner. Plays a role in granulosa cell apoptosis by CASP3 activation. Plays a roles as anti-apoptotic protein during neuronal apoptotic process, by negatively regulating poly ADP-ribose polymerase-dependent cell death through regulation of neuronal calcium homeostasis and mitochondrial bioenergetics in response to NMDA excitation. In addition to its role in apoptosis, may regulate trophoblast cell proliferation during the early stages of placental development, by acting on G1/S transition through regulation of CCNE1 expression. May also play a role as an inducer of autophagy by disrupting interaction between MCL1 and BECN1. In Mus musculus (Mouse), this protein is Bcl-2-related ovarian killer protein.